The primary structure comprises 1295 residues: Phosphoribosylformylglycinamidine synthase (1295 aa).

Residues 302 to 327 form a disordered region; the sequence is APFSGAATGSGGEIRDEGATGRGSKP. ATP-binding positions include 306–317 and A677; that span reads GAATGSGGEIRD. Mg(2+)-binding residues include D678, E717, N721, and D884. S886 serves as a coordination point for ATP. The 254-residue stretch at 1042 to 1295 folds into the Glutamine amidotransferase type-1 domain; that stretch reads MAILREQGVN…MFRNARVYLG (254 aa). C1135 acts as the Nucleophile in catalysis. Active-site residues include H1260 and E1262.

The protein in the N-terminal section; belongs to the FGAMS family. In terms of assembly, monomer.

Its subcellular location is the cytoplasm. The catalysed reaction is N(2)-formyl-N(1)-(5-phospho-beta-D-ribosyl)glycinamide + L-glutamine + ATP + H2O = 2-formamido-N(1)-(5-O-phospho-beta-D-ribosyl)acetamidine + L-glutamate + ADP + phosphate + H(+). It participates in purine metabolism; IMP biosynthesis via de novo pathway; 5-amino-1-(5-phospho-D-ribosyl)imidazole from N(2)-formyl-N(1)-(5-phospho-D-ribosyl)glycinamide: step 1/2. In terms of biological role, phosphoribosylformylglycinamidine synthase involved in the purines biosynthetic pathway. Catalyzes the ATP-dependent conversion of formylglycinamide ribonucleotide (FGAR) and glutamine to yield formylglycinamidine ribonucleotide (FGAM) and glutamate. The chain is Phosphoribosylformylglycinamidine synthase from Pseudoalteromonas atlantica (strain T6c / ATCC BAA-1087).